Reading from the N-terminus, the 322-residue chain is Cell division control protein 10 (322 aa).

M1 is modified (N-acetylmethionine). Positions 29–302 (KGFQFNIMVV…EGFRARQLIA (274 aa)) constitute a Septin-type G domain. Residues 39 to 46 (GQSGLGKS) form a G1 motif region. Residues 39-46 (GQSGLGKS), T74, G100, and 180-188 (KSDTLTLDE) contribute to the GTP site. The interval 97 to 100 (DTPG) is G3 motif. A G4 motif region spans residues 179–182 (GKSD). Residue T216 is modified to Phosphothreonine. 2 residues coordinate GTP: G236 and R251.

The protein belongs to the TRAFAC class TrmE-Era-EngA-EngB-Septin-like GTPase superfamily. Septin GTPase family. In terms of assembly, component of the septin complex which consists of CDC3, CDC10, CDC11, CDC12 and probably SHS1 and rearranges to a cortical collar of highly ordered filaments at the mother-bud-neck. A complex formed by CDC3, CDC10, CDC11 and CDC12 is capable of forming long filaments in vitro and the components seem to be present in a 2:2:2:2 arrangement in vivo. The filaments are proposed to be formed by the end-to-end polymerization of CDC3-CDC12-CDC11 complexes with CDC10 serving as a bridge to bundle the polymers into paired filaments. Component of the GIN4 complex composed of at least BNI5, CDC3, CDC10, CDC11, CDC12, GIN4, NAP1 and SHS1. Self-associates. Interacts with SYP1.

Its subcellular location is the membrane. It is found in the bud neck. Septins are GTPases involved in cytokinesis that assemble early in the cell cycle as a patch at the incipient bud site and form a ring approximate 15 minutes before bud emergence, which transforms into an hour-glass shaped collar of cortical filaments that spans both sides of the mother-bud neck. This collar persists until just before cytokinesis, when it splits into two rings that occupy opposite sides of the neck. The septins at the bud neck serve as a structural scaffold that recruits different components involved in diverse processes at specific stages during the cell cycle. Many proteins bind asymmetrically to the septin collar. The septin assembly is regulated by protein kinases GIN4 and/or CLA4. May act by recruiting MYO1 and HOF1, a protein involved in septation, to the site of cleavage. Septins are also involved in cell morphogenesis, bud site selection, chitin deposition, cell cycle regulation, cell compartmentalization and spore wall formation. This Saccharomyces cerevisiae (strain ATCC 204508 / S288c) (Baker's yeast) protein is Cell division control protein 10 (CDC10).